Consider the following 579-residue polypeptide: Fatty-acid amide hydrolase 1 (579 aa).

A helical transmembrane segment spans residues 9-29 (AFSGPSGVALACCLVAAALAL). Over 30-403 (RWSSRRMARG…GDYVDSCLGD (374 aa)) the chain is Cytoplasmic. The Charge relay system role is filled by Lys142. Substrate contacts are provided by residues Met191, Ser217, and 238 to 241 (IGGS). The active-site Charge relay system is the Ser217. Ser241 acts as the Acyl-ester intermediate in catalysis. Ser241 is subject to Phosphoserine. Residues 404-433 (LISILRLPKWLKGLLAFMLRPLLPRLAGFL) lie within the membrane without spanning it. The Cytoplasmic segment spans residues 434–579 (SSLRPRSAGK…RLMAPGRQPS (146 aa)).

This sequence belongs to the amidase family. In terms of assembly, homodimer.

It is found in the endoplasmic reticulum membrane. Its subcellular location is the golgi apparatus membrane. The catalysed reaction is N-(5Z,8Z,11Z,14Z-eicosatetraenoyl)-ethanolamine + H2O = ethanolamine + (5Z,8Z,11Z,14Z)-eicosatetraenoate. The enzyme catalyses (9Z)-octadecenamide + H2O = (9Z)-octadecenoate + NH4(+). It carries out the reaction 2-(5Z,8Z,11Z,14Z-eicosatetraenoyl)-glycerol + H2O = glycerol + (5Z,8Z,11Z,14Z)-eicosatetraenoate + H(+). It catalyses the reaction 1-O-methyl-(5Z,8Z,11Z,14Z)-eicosatetraenoate + H2O = methanol + (5Z,8Z,11Z,14Z)-eicosatetraenoate + H(+). The catalysed reaction is (9Z,12Z,15Z)-octadecatrienamide + H2O = (9Z,12Z,15Z)-octadecatrienoate + NH4(+). The enzyme catalyses (5Z,8Z,11Z,14Z)-eicosatetraenamide + H2O = (5Z,8Z,11Z,14Z)-eicosatetraenoate + NH4(+). It carries out the reaction (6Z)-octadecenamide + H2O = (6Z)-octadecenoate + NH4(+). It catalyses the reaction (15Z)-tetracosenamide + H2O = (15Z)-tetracosenoate + NH4(+). The catalysed reaction is (8Z,11Z,14Z)-eicosatrienamide + H2O = (8Z,11Z,14Z)-eicosatrienoate + NH4(+). The enzyme catalyses (11Z,14Z,17Z)-eicosatrienamide + H2O = (11Z,14Z,17Z)-eicosatrienoate + NH4(+). It carries out the reaction (11Z,14Z)-eicosadienamide + H2O = (11Z,14Z)-eicosadienoate + NH4(+). It catalyses the reaction (9Z,12Z)-octadecadienamide + H2O = (9Z,12Z)-octadecadienoate + NH4(+). The catalysed reaction is tetradecamide + H2O = tetradecanoate + NH4(+). The enzyme catalyses N-(9Z-octadecenoyl) ethanolamine + H2O = ethanolamine + (9Z)-octadecenoate. It carries out the reaction N-(9Z-octadecenoyl)-taurine + H2O = taurine + (9Z)-octadecenoate. It catalyses the reaction (11Z)-eicosenamide + H2O = (11Z)-eicosenoate + NH4(+). The catalysed reaction is N-(9Z-hexadecenoyl) ethanolamine + H2O = (9Z)-hexadecenoate + ethanolamine. The enzyme catalyses N-octadecanoyl ethanolamine + H2O = octadecanoate + ethanolamine. It carries out the reaction N-docosanoyl-ethanolamine + H2O = docosanoate + ethanolamine. It catalyses the reaction N-tetracosanoyl-taurine + H2O = tetracosanoate + taurine. The catalysed reaction is N-(15Z-tetracosenoyl)-ethanolamine + H2O = (15Z)-tetracosenoate + ethanolamine. The enzyme catalyses N-docosanoyl-taurine + H2O = docosanoate + taurine. It carries out the reaction N-(15Z-tetracosenoyl)-taurine + H2O = (15Z)-tetracosenoate + taurine. It catalyses the reaction N-tricosanoyl-taurine + H2O = tricosanoate + taurine. The catalysed reaction is (9Z)-octadecenoate + glycine = N-(9Z-octadecenoyl)glycine + H2O. The enzyme catalyses N-(5Z,8Z,11Z,14Z)-eicosatetraenoyl-glycine + H2O = (5Z,8Z,11Z,14Z)-eicosatetraenoate + glycine. It carries out the reaction N-(5Z,8Z,11Z,14Z-eicosatetraenoyl)-L-serine + H2O = (5Z,8Z,11Z,14Z)-eicosatetraenoate + L-serine. Its activity is regulated as follows. inhibited by trifluoromethyl ketone. Functionally, catalyzes the hydrolysis of endogenous amidated lipids like the sleep-inducing lipid oleamide ((9Z)-octadecenamide), the endocannabinoid anandamide (N-(5Z,8Z,11Z,14Z-eicosatetraenoyl)-ethanolamine), as well as other fatty amides, to their corresponding fatty acids, thereby regulating the signaling functions of these molecules. Also catalyzes the hydrolysis of the endocannabinoid 2-arachidonoylglycerol (2-(5Z,8Z,11Z,14Z-eicosatetraenoyl)-glycerol). FAAH cooperates with PM20D1 in the hydrolysis of amino acid-conjugated fatty acids such as N-fatty acyl glycine and N-fatty acyl-L-serine, thereby acting as a physiological regulator of specific subsets of intracellular, but not of extracellular, N-fatty acyl amino acids. The polypeptide is Fatty-acid amide hydrolase 1 (FAAH) (Sus scrofa (Pig)).